A 464-amino-acid chain; its full sequence is Opioid growth factor receptor-like protein 1 (464 aa).

Disordered stretches follow at residues 1 to 91 (MGNL…AKPK) and 309 to 464 (ENFI…TSSG). Residues 43-59 (QQHDEPEQPKQPPERAG) show a composition bias toward basic and acidic residues. Residues 74–86 (AAGAEQGGESTEG) are compositionally biased toward low complexity. Residues 316–325 (PKKELPERSK) show a composition bias toward basic and acidic residues. Positions 327 to 342 (QKTPTLPASGSNGQTS) are enriched in polar residues. Composition is skewed to basic and acidic residues over residues 363-382 (SVEE…DKPS), 390-400 (PKPRNTEKDSA), and 425-439 (SEKD…KDSE). Residues 452 to 464 (AQQNATNPQTSSG) show a composition bias toward polar residues.

This sequence belongs to the opioid growth factor receptor family.

The sequence is that of Opioid growth factor receptor-like protein 1 (Ogfrl1) from Mus musculus (Mouse).